A 199-amino-acid polypeptide reads, in one-letter code: Recombination protein RecR (199 aa).

The C4-type zinc-finger motif lies at 58 to 73 (CQRCFHLSSEDLCNIC). One can recognise a Toprim domain in the interval 81–175 (QTICVVADPR…RVTRIAFGLP (95 aa)).

Belongs to the RecR family.

Its function is as follows. May play a role in DNA repair. It seems to be involved in an RecBC-independent recombinational process of DNA repair. It may act with RecF and RecO. This Synechococcus elongatus (strain ATCC 33912 / PCC 7942 / FACHB-805) (Anacystis nidulans R2) protein is Recombination protein RecR.